The following is a 651-amino-acid chain: DNA mismatch repair protein MutL (651 aa).

The segment at 383–405 (TAAEEPTPAPTSPDLEIGDLDDQ) is disordered.

It belongs to the DNA mismatch repair MutL/HexB family.

This protein is involved in the repair of mismatches in DNA. It is required for dam-dependent methyl-directed DNA mismatch repair. May act as a 'molecular matchmaker', a protein that promotes the formation of a stable complex between two or more DNA-binding proteins in an ATP-dependent manner without itself being part of a final effector complex. In Lacticaseibacillus casei (strain BL23) (Lactobacillus casei), this protein is DNA mismatch repair protein MutL.